Consider the following 188-residue polypeptide: HTH-type transcriptional repressor AcnR (188 aa).

Residues 10–70 form the HTH tetR-type domain; it reads VNSRQEILEG…ALAREDAARM (61 aa). Residues 33 to 52 constitute a DNA-binding region (H-T-H motif); that stretch reads TVRRLEEATGKSRGAIFHHF. Citrate-binding positions include 79–80, R130, and N134; that span reads LV. Residue E181 participates in Mg(2+) binding. R185 contacts citrate.

As to quaternary structure, homodimer.

In terms of biological role, acnR negatively controls the expression of the aconitase gene acn. This Corynebacterium efficiens (strain DSM 44549 / YS-314 / AJ 12310 / JCM 11189 / NBRC 100395) protein is HTH-type transcriptional repressor AcnR.